The primary structure comprises 140 residues: ATP synthase epsilon chain (140 aa).

The protein belongs to the ATPase epsilon chain family. In terms of assembly, F-type ATPases have 2 components, CF(1) - the catalytic core - and CF(0) - the membrane proton channel. CF(1) has five subunits: alpha(3), beta(3), gamma(1), delta(1), epsilon(1). CF(0) has three main subunits: a, b and c.

It is found in the cell inner membrane. Functionally, produces ATP from ADP in the presence of a proton gradient across the membrane. This is ATP synthase epsilon chain from Neisseria meningitidis serogroup C (strain 053442).